A 461-amino-acid polypeptide reads, in one-letter code: Cysteine--tRNA ligase (461 aa).

C28 lines the Zn(2+) pocket. The 'HIGH' region motif lies at 30 to 40 (MTVYDYCHLGH). The Zn(2+) site is built by C212, H237, and E241. The 'KMSKS' region motif lies at 269 to 273 (KMSKS). K272 is a binding site for ATP.

Belongs to the class-I aminoacyl-tRNA synthetase family. Monomer. It depends on Zn(2+) as a cofactor.

Its subcellular location is the cytoplasm. It carries out the reaction tRNA(Cys) + L-cysteine + ATP = L-cysteinyl-tRNA(Cys) + AMP + diphosphate. This Aromatoleum aromaticum (strain DSM 19018 / LMG 30748 / EbN1) (Azoarcus sp. (strain EbN1)) protein is Cysteine--tRNA ligase.